We begin with the raw amino-acid sequence, 545 residues long: MAKRIIYNENARRALEKGMDILAESVAVTLGPKGRNVVLEKKFGAPQIVNDGVTIAKEIELEDHIENTGVALIRQAASKTNDAAGDGTTTATVLAHAMVKEGLRNVAAGANPIALKRGIDKATQFLVEKIAEHARPVEDSKAIAQVAAISAGNDEEVGRMIADAMDKVGKEGVISLEEGKSMTTELEVTEGMRFDKGYISPYFATDTERMEAVLDEPFVLVTDKKITLVQDLVPILEQVARAGKPLVIIAEDIEKEALATLVVNRLRGVLNVAAVKAPGFGDRRKAMLEDIAVLTAGQVITEDAGLKLENAKLDMLGKARRITITKDHTTIVAEGNEKAVKARCEQIRRQIEETDSSYDKEKLQERLAKLAGGVAVIKVGAATETEMKDRKLRLEDAINATKAAVEEGIVPGGGTTLVHLAPELSNWAAEHLTGEELIGANIVERALSAPLRRIAENAGQNGAIIVERVKEKPFDVGYDAAKDEYVNMFDAGIVDPAKVTRSALQNAASIAGMVLTTECIIVDKPEPKENNPAGSGAGMGGDFDY.

Residues threonine 29 to proline 32, aspartate 86 to threonine 90, glycine 413, aspartate 479 to alanine 481, and aspartate 495 contribute to the ATP site. The tract at residues proline 525–tyrosine 545 is disordered. Gly residues predominate over residues serine 535–tyrosine 545.

It belongs to the chaperonin (HSP60) family. Forms a cylinder of 14 subunits composed of two heptameric rings stacked back-to-back. Interacts with the co-chaperonin GroES.

The protein resides in the cytoplasm. It catalyses the reaction ATP + H2O + a folded polypeptide = ADP + phosphate + an unfolded polypeptide.. Functionally, together with its co-chaperonin GroES, plays an essential role in assisting protein folding. The GroEL-GroES system forms a nano-cage that allows encapsulation of the non-native substrate proteins and provides a physical environment optimized to promote and accelerate protein folding. In Thermosynechococcus vestitus (strain NIES-2133 / IAM M-273 / BP-1), this protein is Chaperonin GroEL 1.